The chain runs to 72 residues: SRY-related protein MG44 (72 aa).

A DNA-binding region (HMG box) is located at residues 1-69 (VKRPMNAFMV…KHMADYPNYK (69 aa)).

The protein resides in the nucleus. This is SRY-related protein MG44 from Tarentola mauritanica (Common wall gecko).